A 117-amino-acid polypeptide reads, in one-letter code: Non-specific lipid-transfer protein (117 aa).

Positions 1–26 (MACSAMTKLALVVALCMVVSVPIAQA) are cleaved as a signal peptide. 4 disulfides stabilise this stretch: Cys29–Cys76, Cys39–Cys53, Cys54–Cys99, and Cys74–Cys113.

This sequence belongs to the plant LTP family.

Plant non-specific lipid-transfer proteins transfer phospholipids as well as galactolipids across membranes. May play a role in wax or cutin deposition in the cell walls of expanding epidermal cells and certain secretory tissues. This is Non-specific lipid-transfer protein from Prunus avium (Cherry).